Consider the following 247-residue polypeptide: Ribosomal RNA small subunit methyltransferase J (247 aa).

S-adenosyl-L-methionine is bound by residues 106-107 (RD), 122-123 (ER), and Asp-168.

This sequence belongs to the methyltransferase superfamily. RsmJ family.

It is found in the cytoplasm. It carries out the reaction guanosine(1516) in 16S rRNA + S-adenosyl-L-methionine = N(2)-methylguanosine(1516) in 16S rRNA + S-adenosyl-L-homocysteine + H(+). Functionally, specifically methylates the guanosine in position 1516 of 16S rRNA. The polypeptide is Ribosomal RNA small subunit methyltransferase J (Alcanivorax borkumensis (strain ATCC 700651 / DSM 11573 / NCIMB 13689 / SK2)).